We begin with the raw amino-acid sequence, 265 residues long: Metal-activated transcriptional activator protein AMT1 (265 aa).

The copper-fist DNA-binding region spans 1-40 (MVVINGVKYACDSCIKSHKAAQCEHNDRPLKILKPRGRPP). Residues cysteine 11, cysteine 14, cysteine 23, and histidine 25 each coordinate Zn(2+). The segment at 103–129 (RRKRTQKSNKKDNLSINSPTNNSPSPA) is disordered. Positions 119 to 128 (NSPTNNSPSP) are enriched in low complexity.

The protein resides in the nucleus. Functionally, trans-acting regulatory protein that activates transcription of the MT genes (metallothionein) in response to copper or silver ions. This Candida glabrata (strain ATCC 2001 / BCRC 20586 / JCM 3761 / NBRC 0622 / NRRL Y-65 / CBS 138) (Yeast) protein is Metal-activated transcriptional activator protein AMT1 (AMT1).